Reading from the N-terminus, the 250-residue chain is 3-deoxy-manno-octulosonate cytidylyltransferase (250 aa).

Belongs to the KdsB family.

Its subcellular location is the cytoplasm. The enzyme catalyses 3-deoxy-alpha-D-manno-oct-2-ulosonate + CTP = CMP-3-deoxy-beta-D-manno-octulosonate + diphosphate. The protein operates within nucleotide-sugar biosynthesis; CMP-3-deoxy-D-manno-octulosonate biosynthesis; CMP-3-deoxy-D-manno-octulosonate from 3-deoxy-D-manno-octulosonate and CTP: step 1/1. Its pathway is bacterial outer membrane biogenesis; lipopolysaccharide biosynthesis. Activates KDO (a required 8-carbon sugar) for incorporation into bacterial lipopolysaccharide in Gram-negative bacteria. The protein is 3-deoxy-manno-octulosonate cytidylyltransferase of Thioalkalivibrio sulfidiphilus (strain HL-EbGR7).